The sequence spans 447 residues: Tubulin beta chain (447 aa).

GTP contacts are provided by Q11, E69, S138, G142, T143, G144, N204, and N226. Mg(2+) is bound at residue E69. The interval 424–447 (QYQEASVSEGEEEYDEEAPLEGEE) is disordered. A compositionally biased stretch (acidic residues) spans 432-447 (EGEEEYDEEAPLEGEE).

This sequence belongs to the tubulin family. As to quaternary structure, dimer of alpha and beta chains. A typical microtubule is a hollow water-filled tube with an outer diameter of 25 nm and an inner diameter of 15 nM. Alpha-beta heterodimers associate head-to-tail to form protofilaments running lengthwise along the microtubule wall with the beta-tubulin subunit facing the microtubule plus end conferring a structural polarity. Microtubules usually have 13 protofilaments but different protofilament numbers can be found in some organisms and specialized cells. Requires Mg(2+) as cofactor.

Its subcellular location is the cytoplasm. The protein localises to the cytoskeleton. Tubulin is the major constituent of microtubules, a cylinder consisting of laterally associated linear protofilaments composed of alpha- and beta-tubulin heterodimers. Microtubules grow by the addition of GTP-tubulin dimers to the microtubule end, where a stabilizing cap forms. Below the cap, tubulin dimers are in GDP-bound state, owing to GTPase activity of alpha-tubulin. In Dothistroma septosporum (Red band needle blight fungus), this protein is Tubulin beta chain (TUB1).